A 502-amino-acid chain; its full sequence is MKNQSRVLNSELGDFDLSVLWDQILNFEGYGSYCFRPMDMDGYHKRSAGLNPCKHSGFSHSSRPMAPGIYRYPEVKSSLRRQVHAPVRILNSGRDRSTRQGSGNVLGTFLTRNNDMWKRNALDSSLRYRTDREVIDVDDELGDVEMISDDTSREGVENVAMEVDEVEEKAEMGNGLFSEVASLKNGSLRVGECSKANSSSLVVNRPVTDVTSFEAYRKVLESAVNRTSKLKDRGFVDFFKERGRALLRSLSSFWRQDEEPVEVVQREAFVPLSREEETAVRRAFSANDSNILVTHKNSNIDITGKILRCLKPGKWLNDEVINLYMVLLKEREAREPKKFLKCHFFNTFFFTKLVNSATGYNYGAVRRWTSMKRLGYHLKDCDKIFIPIHMNIHWTLAVINIKDQKFQYLDSFKGREPKILDALARYFVDEVRDKSEVDLDVSRWRQEFVQDLPMQRNGFDCGMFMVKYIDFYSRGLDLCFTQEQMPYFRARTAKEILQLKAE.

Residues His393, Asp410, and Cys461 contribute to the active site.

It belongs to the peptidase C48 family.

Its function is as follows. Protease that catalyzes two essential functions in the SUMO pathway: processing of full-length SUMOs to their mature forms and deconjugation of SUMO from targeted proteins. Cleaves precursors of SUM1 and SUM2, and very inefficiently of SUM3. Seems to be the only ULP1 able to cleave SUM3 precursors. Cleaves SUMO peptides better than SUMO-conjugated proteins. The chain is Ubiquitin-like-specific protease 1A (ULP1A) from Arabidopsis thaliana (Mouse-ear cress).